We begin with the raw amino-acid sequence, 345 residues long: MAQRGGARRPRGDRERLGSRLRALRPGREPRQSEPPAQRGPPPSGRPPARSTASGHDRPTRGAAAGARRPRMKKKTRRRSTRSEELTRSEELTLSEEATWSEEATQSEEATQGEEMNRSQEVTRDEESTRSEEVTREEMAAAGLTVTVTHSNEKHDLHVTSQQGSSEPVVQDLAQVVEEVIGVPQSFQKLIFKGKSLKEMETPLSALGIQDGCRVMLIGKKNSPQEEVELKKLKHLEKSVEKIADQLEELNKELTGIQQGFLPKDLQAEALCKLDRRVKATIEQFMKILEEIDTLILPENFKDSRLKRKGLVKKVQAFLAECDTVEQNICQETERLQSTNFALAE.

Positions 1 to 137 (MAQRGGARRP…STRSEEVTRE (137 aa)) are disordered. Basic residues predominate over residues 68 to 80 (RRPRMKKKTRRRS). Over residues 81 to 91 (TRSEELTRSEE) the composition is skewed to basic and acidic residues. Over residues 95–114 (SEEATWSEEATQSEEATQGE) the composition is skewed to low complexity. A run of 7 repeats spans residues 96–101 (EEATWS), 102–107 (EEATQS), 108–113 (EEATQG), 114–119 (EEMNRS), 120–125 (QEVTRD), 126–131 (EESTRS), and 132–137 (EEVTRE). The interval 96 to 137 (EEATWSEEATQSEEATQGEEMNRSQEVTRDEESTRSEEVTRE) is 7 X 6 AA tandem repeat of E-E-X(4). Residues 115–137 (EMNRSQEVTRDEESTRSEEVTRE) are compositionally biased toward basic and acidic residues. Residues 144 to 224 (LTVTVTHSNE…VMLIGKKNSP (81 aa)) enclose the Ubiquitin-like domain. Residues 172–219 (DLAQVVEEVIGVPQSFQKLIFKGKSLKEMETPLSALGIQDGCRVMLIG) form an interaction with HSPA8 region. An interaction with PPP1R15A region spans residues 216–345 (MLIGKKNSPQ…LQSTNFALAE (130 aa)). At Ser-223 the chain carries Phosphoserine. One can recognise a BAG domain in the interval 246–326 (QLEELNKELT…AFLAECDTVE (81 aa)).

As to quaternary structure, homodimer. Forms a heteromeric complex with HSP70/HSC70. Binds to the ATPase domain of HSP/HSC70 chaperones. Isoform 1, isoform 3 and isoform 4 but not isoform 2 interact with HSPA8/HSC70. Interacts with NR3C1. Interacts with the N-terminal region of MAPRE2. Interacts with PPP1R15A. Interacts with BCL2 in an ATP-dependent manner. Isoform 2 does not interact with BCL2. Interacts with SIAH1. Interacts with HSPA8 (via NBD). Interacts with HSPA1A (via NBD) and HSPA1B (via NBD). Interacts with SIAH2. Interacts with ESR1; the interaction is promoted in the absence of estradiol (17-beta-estradiol/E2). Post-translationally, ubiquitinated; mediated by SIAH1 or SIAH2 and leading to its subsequent proteasomal degradation. Isoform 4 is the most abundantly expressed isoform. It is ubiquitously expressed throughout most tissues, except the liver, colon, breast and uterine myometrium. Isoform 1 is expressed in the ovary and testis. Isoform 4 is expressed in several types of tumor cell lines, and at consistently high levels in leukemia and lymphoma cell lines. Isoform 1 is expressed in the prostate, breast and leukemia cell lines. Isoform 3 is the least abundant isoform in tumor cell lines (at protein level).

Its subcellular location is the nucleus. It is found in the cytoplasm. Its function is as follows. Co-chaperone for HSP70 and HSC70 chaperone proteins. Acts as a nucleotide-exchange factor (NEF) promoting the release of ADP from the HSP70 and HSC70 proteins thereby triggering client/substrate protein release. Nucleotide release is mediated via its binding to the nucleotide-binding domain (NBD) of HSPA8/HSC70 where as the substrate release is mediated via its binding to the substrate-binding domain (SBD) of HSPA8/HSC70. Inhibits the pro-apoptotic function of PPP1R15A, and has anti-apoptotic activity. Markedly increases the anti-cell death function of BCL2 induced by various stimuli. Involved in the STUB1-mediated proteasomal degradation of ESR1 in response to age-related circulating estradiol (17-beta-estradiol/E2) decline, thereby promotes neuronal apoptosis in response to ischemic reperfusion injury. This chain is BAG family molecular chaperone regulator 1 (BAG1), found in Homo sapiens (Human).